Reading from the N-terminus, the 176-residue chain is Oligoribonuclease (176 aa).

The Exonuclease domain occupies 2–159 (EMTGLNPETD…DDILESIEEM (158 aa)). The active site involves Y117.

Belongs to the oligoribonuclease family.

The protein resides in the cytoplasm. Functionally, 3'-to-5' exoribonuclease specific for small oligoribonucleotides. The protein is Oligoribonuclease of Neisseria gonorrhoeae (strain ATCC 700825 / FA 1090).